We begin with the raw amino-acid sequence, 174 residues long: Large ribosomal subunit protein uL10 (174 aa).

The protein belongs to the universal ribosomal protein uL10 family. In terms of assembly, part of the ribosomal stalk of the 50S ribosomal subunit. The N-terminus interacts with L11 and the large rRNA to form the base of the stalk. The C-terminus forms an elongated spine to which L12 dimers bind in a sequential fashion forming a multimeric L10(L12)X complex.

Forms part of the ribosomal stalk, playing a central role in the interaction of the ribosome with GTP-bound translation factors. The polypeptide is Large ribosomal subunit protein uL10 (Anaeromyxobacter dehalogenans (strain 2CP-C)).